Here is a 158-residue protein sequence, read N- to C-terminus: Cyclic pyranopterin monophosphate synthase (158 aa).

Residues 75–77 and 113–114 contribute to the substrate site; these read LCH and ME. Asp-128 is a catalytic residue.

Belongs to the MoaC family. Homohexamer; trimer of dimers.

It carries out the reaction (8S)-3',8-cyclo-7,8-dihydroguanosine 5'-triphosphate = cyclic pyranopterin phosphate + diphosphate. Its pathway is cofactor biosynthesis; molybdopterin biosynthesis. Its function is as follows. Catalyzes the conversion of (8S)-3',8-cyclo-7,8-dihydroguanosine 5'-triphosphate to cyclic pyranopterin monophosphate (cPMP). This Roseiflexus sp. (strain RS-1) protein is Cyclic pyranopterin monophosphate synthase.